We begin with the raw amino-acid sequence, 715 residues long: MVQKYQSPVRVYKYPFELIMAAYERRFPTCPLIPMFVGSDTVNEFKSEDGAIHVIERRCKLDVDAPRLLKKIAGVDYVYFVQKNSLNSRERTLHIEAYNETFSNRVIINEHCCYTVHPENEDWTCFEQSASLDIKSFFGFESTVEKIAMKQYTSNIKKGKEIIEYYLRQLEEEGITFVPRWSPPSITTSSETSSSSSKKQAASMAVVIPEAALKEGLSGDALSSPSAPEPVVGTPDDKLDADYIKRYLGDLTPLQESCLIRLRQWLQETHKGKIPKDEHILRFLRARDFNIDKAREIMCQSLTWRKQHQVDYILETWTPPQVLQDYYAGGWHHHDKDGRPLYVLRLGQMDTKGLVRALGEEALLRYVLSINEEGLRRCEENTKVFGRPISSWTCLVDLEGLNMRHLWRPGVKALLRIIEVVEANYPETLGRLLILRAPRVFPVLWTLVSPFIDDNTRRKFLIYAGNDYQGPGGLLDYIDKEIIPDFLSGECMCEVPEGGLVPKSLYRTAEELENEDLKLWTETIYQSASVFKGAPHEILIQIVDASSVITWDFDVCKGDIVFNIYHSKRSPQPPKKDSLGAHSITSPGGNNVQLIDKVWQLGRDYSMVESPLICKEGESVQGSHVTRWPGFYILQWKFHSMPACAASSLPRVDDVLASLQVSSHKCKVMYYTEVIGSEDFRGSMTSLESSHSGFSQLSAATTSSSQSHSSSMISR.

The 175-residue stretch at 1-175 folds into the PRELI/MSF1 domain; that stretch reads MVQKYQSPVR…YLRQLEEEGI (175 aa). The interval 1–510 is required for interaction and inhibitory function toward RIGI; it reads MVQKYQSPVR…VPKSLYRTAE (510 aa). Position 234 is a phosphothreonine (Thr234). The CRAL-TRIO domain maps to 319 to 495; sequence PPQVLQDYYA…FLSGECMCEV (177 aa). The GOLD domain occupies 521–674; that stretch reads TETIYQSASV…KCKVMYYTEV (154 aa). Ser586 bears the Phosphoserine mark.

In terms of assembly, interacts with RIGI (via tandem CARD domain); the interaction is direct. Interacts (via GOLD domain) with SLC18A3; the interaction is direct. Interacts with SLC5A7 (via GOLD domain); the interaction is direct. In terms of tissue distribution, ubiquitous.

It is found in the cytoplasm. Its subcellular location is the golgi apparatus. May play a role in innate immunity by inhibiting the antiviral RIG-I signaling pathway. In this pathway, functions as a negative regulator of RIGI, the cytoplasmic sensor of viral nucleic acids. Prevents the interaction of RIGI with MAVS/IPS1, an important step in signal propagation. May also regulate the SLC18A3 and SLC5A7 cholinergic transporters. This chain is SEC14-like protein 1 (SEC14L1), found in Homo sapiens (Human).